Consider the following 898-residue polypeptide: Eukaryotic translation initiation factor 3 subunit C (898 aa).

A compositionally biased stretch (basic and acidic residues) spans 1-10 (MSRFFHAKED). Disordered regions lie at residues 1–38 (MSRFFHAKEDSDSDTSSSEDEVEDQKVNKSAKFRDDLD) and 162–238 (VTDY…SVTK). Residues 11 to 23 (SDSDTSSSEDEVE) show a composition bias toward acidic residues. Basic and acidic residues predominate over residues 24-37 (DQKVNKSAKFRDDL). Over residues 170–187 (DEDGYETPEDEDDDDFGE) the composition is skewed to acidic residues. Positions 189-202 (SESKAEKSPGKPSE) are enriched in basic and acidic residues. Positions 209–218 (SDSDSDDDDS) are enriched in acidic residues. A compositionally biased stretch (low complexity) spans 219-228 (SNWSSEPESN). One can recognise a PCI domain in the interval 630–806 (YHMHINVELM…DCLIMHRVEP (177 aa)). The disordered stretch occupies residues 829-898 (QILEPRTGRG…RRHPQKPRAF (70 aa)). 2 stretches are compositionally biased toward basic and acidic residues: residues 850–859 (RNERQGDKQK) and 866–878 (GERRGGQGQDGKR). A compositionally biased stretch (basic residues) spans 888-898 (QRRHPQKPRAF).

Belongs to the eIF-3 subunit C family. As to quaternary structure, component of the eukaryotic translation initiation factor 3 (eIF-3) complex.

The protein localises to the cytoplasm. In terms of biological role, component of the eukaryotic translation initiation factor 3 (eIF-3) complex, which is involved in protein synthesis of a specialized repertoire of mRNAs and, together with other initiation factors, stimulates binding of mRNA and methionyl-tRNAi to the 40S ribosome. The eIF-3 complex specifically targets and initiates translation of a subset of mRNAs involved in cell proliferation. In Caenorhabditis elegans, this protein is Eukaryotic translation initiation factor 3 subunit C.